The following is a 238-amino-acid chain: Monocyte to macrophage differentiation factor (238 aa).

Residues 1–28 (MRFRNRFQRFMNHRAPANGRYKPTCYEH) lie on the Cytoplasmic side of the membrane. Residues 29-49 (AANCYTHAFLIVPAIVGSALL) traverse the membrane as a helical segment. At 50 to 61 (HRLSDDCWEKIT) the chain is on the lumenal side. A helical transmembrane segment spans residues 62–82 (AWIYGMGLCALFIVSTVFHIV). Over 83 to 101 (SWKKSHLRTVEHCFHMCDR) the chain is Cytoplasmic. A helical transmembrane segment spans residues 102–122 (MVIYFFIAASYAPWLNLRELG). Position 123 (Pro123) is a topological domain, lumenal. Residues 124-144 (LASHMRWFIWLMAAGGTIYVF) form a helical membrane-spanning segment. The Cytoplasmic segment spans residues 145 to 151 (LYHEKYK). The helical transmembrane segment at 152-172 (VVELFFYLTMGFSPALVVTSM) threads the bilayer. The Lumenal portion of the chain corresponds to 173–174 (NN). Residues 175–195 (TDGLQELACGGLIYCLGVVFF) form a helical membrane-spanning segment. The Cytoplasmic portion of the chain corresponds to 196–198 (KSD). Residues 199–219 (GIIPFAHAIWHLFVATAAAVH) form a helical membrane-spanning segment. Residues 220-238 (YYAIWKYLYRSPTDFIRHL) lie on the Lumenal side of the membrane.

It belongs to the ADIPOR family.

It localises to the late endosome membrane. Its subcellular location is the lysosome membrane. Its function is as follows. Involved in the dynamics of lysosomal membranes associated with microglial activation following brain lesion. This chain is Monocyte to macrophage differentiation factor, found in Mus musculus (Mouse).